Consider the following 708-residue polypeptide: Capsid scaffolding protein (708 aa).

Catalysis depends on charge relay system residues His63, Ser132, and His157. Disordered stretches follow at residues 269–339 (ASAE…MSHP), 455–565 (HPSY…QQQR), and 593–619 (ALPS…SGGG). Low complexity predominate over residues 284 to 293 (PAAGARVPSS). The segment covering 294–311 (SPSPPVEPPSPVQPPALP) has biased composition (pro residues). A compositionally biased stretch (low complexity) spans 326 to 339 (SPSEPAEAASMSHP). The interaction with pAP stretch occupies residues 333-352 (AASMSHPLSAAVPAATAPPG). Positions 498 to 513 (KQHRHGGSGGHNKRRK) are enriched in basic residues. Short sequence motifs (nuclear localization signal) lie at residues 510–515 (KRRKET) and 537–543 (RARKRLK). The span at 593–611 (ALPSAASSSPTTTTVCTPT) shows a compositional bias: low complexity. An interaction with major capsid protein region spans residues 688–708 (PPKDMVDLNRRIFVAALNKLE).

It belongs to the herpesviridae capsid scaffolding protein family. In terms of assembly, homomultimer. Interacts with major capsid protein. As to quaternary structure, exists in a monomer-dimer equilibrium with the dimer being the active species. In terms of processing, capsid scaffolding protein is cleaved by assemblin after formation of the spherical procapsid. As a result, the capsid obtains its mature, icosahedral shape. Cleavages occur at two or more sites: release (R-site) and maturation (M-site).

It localises to the host cytoplasm. It is found in the host nucleus. The catalysed reaction is Cleaves -Ala-|-Ser- and -Ala-|-Ala- bonds in the scaffold protein.. In terms of biological role, acts as a scaffold protein by binding major capsid protein in the cytoplasm, inducing the nuclear localization of both proteins. Multimerizes in the nucleus such as major capsid protein forms the icosahedral T=16 capsid. Autocatalytic cleavage releases the assembly protein, and subsequently abolishes interaction with major capsid protein. Cleavages products are evicted from the capsid before or during DNA packaging. Protease that plays an essential role in virion assembly within the nucleus. Catalyzes the cleavage of the assembly protein after formation of the spherical procapsid. By that cleavage, the capsid matures and gains its icosahedral shape. The cleavage sites seem to include -Ala-Ser-, -Ala-Ala-, as well as Ala-Thr bonds. Assemblin and cleavages products are evicted from the capsid before or during DNA packaging. Functionally, plays a major role in capsid assembly. Acts as a scaffold protein by binding major capsid protein. Multimerizes in the nucleus such as major capsid protein forms the icosahedral T=16 capsid. Cleaved by assemblin after capsid completion. The cleavages products are evicted from the capsid before or during DNA packaging. This is Capsid scaffolding protein (UL80) from Homo sapiens (Human).